Consider the following 1228-residue polypeptide: S-layer protein (1228 aa).

Positions 1–30 are cleaved as a signal peptide; that stretch reads MDRKKAVKLATASAIAASAFVAANPNASEA.

The protein resides in the secreted. It is found in the cell wall. The protein localises to the S-layer. Functionally, the S-layer is a paracrystalline mono-layered assembly of proteins which coat the surface of bacteria. The sequence is that of S-layer protein (sbsA) from Geobacillus stearothermophilus (Bacillus stearothermophilus).